The chain runs to 515 residues: ATP synthase subunit alpha (515 aa).

ATP is bound at residue 171–178; it reads GDRQTGKT.

The protein belongs to the ATPase alpha/beta chains family. As to quaternary structure, F-type ATPases have 2 components, CF(1) - the catalytic core - and CF(0) - the membrane proton channel. CF(1) has five subunits: alpha(3), beta(3), gamma(1), delta(1), epsilon(1). CF(0) has three main subunits: a(1), b(2) and c(9-12). The alpha and beta chains form an alternating ring which encloses part of the gamma chain. CF(1) is attached to CF(0) by a central stalk formed by the gamma and epsilon chains, while a peripheral stalk is formed by the delta and b chains.

The protein resides in the cell inner membrane. The enzyme catalyses ATP + H2O + 4 H(+)(in) = ADP + phosphate + 5 H(+)(out). In terms of biological role, produces ATP from ADP in the presence of a proton gradient across the membrane. The alpha chain is a regulatory subunit. The chain is ATP synthase subunit alpha from Xylella fastidiosa (strain M12).